The chain runs to 330 residues: MGNFHTMLDALLEDQEEAVLATIVQVEGSAYRKAGASMLFKKKGRRIGLLSGGCVEEDVFQRISALGDQLTSTLIPYDMRSEDDLSWGMGAGCNGIIHVHAERITQEKRRHYEKVRDCLHSGKAVTSVIKIESSHYLFLTENGHFGNWPDAPLQDIQRTVSTLHLPHFDQTTNMFIQRIEPKPRLILFGAGPDNVPLANLAADTGFSVIVTDWRPAYCTSSLFPKADQLITAFPEQMLSEFQFFPHDAAVVATHHYQHDQTIINFLFSQNLHYIGLLGSANRTKRLLSGKHPPSHFYSPVGLKIGAEGPEEIAVSVVAEIIQTRKRVAVV.

In terms of assembly, could be composed of four subunits: PucA, PucC, PucD and PucE.

The catalysed reaction is xanthine + NAD(+) + H2O = urate + NADH + H(+). The enzyme catalyses hypoxanthine + NAD(+) + H2O = xanthine + NADH + H(+). Its pathway is purine metabolism; hypoxanthine degradation; urate from hypoxanthine: step 1/2. It participates in purine metabolism; hypoxanthine degradation; urate from hypoxanthine: step 2/2. Its function is as follows. Oxidizes hypoxanthine and xanthine to uric acid. PucA subunit could exert a molybdenum cofactor recruiting function. This Bacillus subtilis (strain 168) protein is Probable xanthine dehydrogenase subunit A (pucA).